The sequence spans 373 residues: UDP-N-acetylglucosamine--N-acetylmuramyl-(pentapeptide) pyrophosphoryl-undecaprenol N-acetylglucosamine transferase (373 aa).

UDP-N-acetyl-alpha-D-glucosamine is bound by residues 10 to 12, asparagine 124, arginine 166, serine 196, and glutamine 301; that span reads TGG.

It belongs to the glycosyltransferase 28 family. MurG subfamily.

The protein localises to the cell membrane. The enzyme catalyses di-trans,octa-cis-undecaprenyl diphospho-N-acetyl-alpha-D-muramoyl-L-alanyl-D-glutamyl-meso-2,6-diaminopimeloyl-D-alanyl-D-alanine + UDP-N-acetyl-alpha-D-glucosamine = di-trans,octa-cis-undecaprenyl diphospho-[N-acetyl-alpha-D-glucosaminyl-(1-&gt;4)]-N-acetyl-alpha-D-muramoyl-L-alanyl-D-glutamyl-meso-2,6-diaminopimeloyl-D-alanyl-D-alanine + UDP + H(+). The protein operates within cell wall biogenesis; peptidoglycan biosynthesis. Its function is as follows. Cell wall formation. Catalyzes the transfer of a GlcNAc subunit on undecaprenyl-pyrophosphoryl-MurNAc-pentapeptide (lipid intermediate I) to form undecaprenyl-pyrophosphoryl-MurNAc-(pentapeptide)GlcNAc (lipid intermediate II). The polypeptide is UDP-N-acetylglucosamine--N-acetylmuramyl-(pentapeptide) pyrophosphoryl-undecaprenol N-acetylglucosamine transferase (Desulforudis audaxviator (strain MP104C)).